Here is a 137-residue protein sequence, read N- to C-terminus: Bombinin-like peptides 2 (137 aa).

A signal peptide spans 1 to 18 (MNFKYIVAVSILIASAYA). Position 70 is an asparagine amide (Asn-70). A disordered region spans residues 92-112 (DSLEHPEEASEKETRGFNQEE). Ile-136 carries the post-translational modification Isoleucine amide.

The protein belongs to the bombinin family. Expressed by the skin glands.

It is found in the secreted. Functionally, bombinin-like peptide 2 has antimicrobial activity, but no hemolytic activity. Preliminary evidence indicates that this peptide does not lyse and thus kill the bacteria by its antimicrobial activity. In terms of biological role, bombinin H2 has antibacterial and hemolytic activity. The sequence is that of Bombinin-like peptides 2 from Bombina variegata (Yellow-bellied toad).